The primary structure comprises 562 residues: MFS-type transporter calB (562 aa).

The span at 1-16 (MDEVTRTAQRSPSITE) shows a compositional bias: polar residues. The disordered stretch occupies residues 1–45 (MDEVTRTAQRSPSITETHAGETKLAGPGEKEGDVESPVDPSADSE). Residues 57–77 (FAILASVTLSAFLMLLDGSII) form a helical membrane-spanning segment. An N-linked (GlcNAc...) asparagine glycan is attached at Asn83. 13 helical membrane passes run 94 to 113 (IGWYTAAYQLASAALQPLSG), 123 to 143 (WTYLFFFGLFELGSLICGVAN), 154 to 174 (VAGLGSSGLLNGGMTIIAGAV), 184 to 204 (GIYLGISQLGIVCGPLIGGAL), 213 to 233 (CFYINLPVGAVTAILLLFLQV), 256 to 276 (LIGFTLFAPAAIMVLLALYYG), 284 to 304 (SSQVIGLFCGAGVTIIVFALW), 329 to 349 (INGAALVASILVAAQYLPIYF), 362 to 382 (VNTLPGILSQLLTVILSGVLV), 389 to 409 (LPFAAAGSAISAVGNGIVTLF), 418 to 438 (WIGYQIVLGSGRGIGMQMGII), 451 to 471 (VGIAFMIFCQNFAGAIFVVVG), and 530 to 550 (VFYLLMSLSLAGFVAAFGMGW). Asn557 is a glycosylation site (N-linked (GlcNAc...) asparagine).

It belongs to the major facilitator superfamily. TCR/Tet family.

The protein localises to the cell membrane. Functionally, MFS-type transporter; part of the gene cluster that mediates the biosynthesis of calbistrin A and related compounds. Calbistrin A is a secondary metabolite with an interesting structure that was recently found to have bioactivity against leukemia cells. It consists of two polyketides linked by an ester bond: a bicyclic decalin containing polyketide and a linear 12 carbon dioic acid structure. Required for the secretion of calbistrin A and calbistrin C, as well as of related compounds decumbenone A, B and C. The sequence is that of MFS-type transporter calB from Penicillium decumbens.